A 522-amino-acid chain; its full sequence is Non-structural maintenance of chromosome element 6 (522 aa).

Residues 482 to 492 (KQKDRYFKDKT) are compositionally biased toward basic and acidic residues. Residues 482–522 (KQKDRYFKDKTSNLSMKENKSFSAKKVKKGKKKNKRQAYKR) are disordered. The span at 504–522 (SAKKVKKGKKKNKRQAYKR) shows a compositional bias: basic residues.

As to quaternary structure, component of the smc5/smc6 complex which consists of two subcomplexes, smc5-smc6-nse2 and nse1-nse2-nse4. Interacts with nse5.

It is found in the nucleus. The protein localises to the chromosome. Acts in a DNA repair pathway for removal of UV-induced DNA damage that is distinct from classical nucleotide excision repair and in repair of ionizing radiation damage. Functions in homologous recombination repair of DNA double strand breaks and in recovery of stalled replication forks. May prevent formation of excessive Holliday junctions or assist in their resolution. The polypeptide is Non-structural maintenance of chromosome element 6 (nse6) (Schizosaccharomyces pombe (strain 972 / ATCC 24843) (Fission yeast)).